The sequence spans 361 residues: Peptide chain release factor 1 (361 aa).

Q235 is subject to N5-methylglutamine. Positions 288–307 (AARSADRKDQVGSGDRSERI) are disordered.

The protein belongs to the prokaryotic/mitochondrial release factor family. In terms of processing, methylated by PrmC. Methylation increases the termination efficiency of RF1.

The protein localises to the cytoplasm. In terms of biological role, peptide chain release factor 1 directs the termination of translation in response to the peptide chain termination codons UAG and UAA. The chain is Peptide chain release factor 1 from Nitrobacter hamburgensis (strain DSM 10229 / NCIMB 13809 / X14).